The primary structure comprises 437 residues: UDP-N-acetylmuramoylalanine--D-glutamate ligase (437 aa).

112 to 118 is an ATP binding site; the sequence is GSNGKST.

This sequence belongs to the MurCDEF family.

The protein resides in the cytoplasm. It catalyses the reaction UDP-N-acetyl-alpha-D-muramoyl-L-alanine + D-glutamate + ATP = UDP-N-acetyl-alpha-D-muramoyl-L-alanyl-D-glutamate + ADP + phosphate + H(+). Its pathway is cell wall biogenesis; peptidoglycan biosynthesis. Its function is as follows. Cell wall formation. Catalyzes the addition of glutamate to the nucleotide precursor UDP-N-acetylmuramoyl-L-alanine (UMA). The sequence is that of UDP-N-acetylmuramoylalanine--D-glutamate ligase from Haemophilus influenzae (strain PittGG).